Reading from the N-terminus, the 127-residue chain is Putative platinum sensitivity protein 1 (127 aa).

In Saccharomyces cerevisiae (strain ATCC 204508 / S288c) (Baker's yeast), this protein is Putative platinum sensitivity protein 1 (PSY1).